The chain runs to 428 residues: Enolase (428 aa).

Gln163 contacts (2R)-2-phosphoglycerate. Catalysis depends on Glu205, which acts as the Proton donor. Mg(2+) contacts are provided by Asp242, Glu286, and Asp313. Lys338, Arg367, Ser368, and Lys389 together coordinate (2R)-2-phosphoglycerate. The Proton acceptor role is filled by Lys338.

It belongs to the enolase family. Mg(2+) is required as a cofactor.

The protein resides in the cytoplasm. It is found in the secreted. Its subcellular location is the cell surface. The enzyme catalyses (2R)-2-phosphoglycerate = phosphoenolpyruvate + H2O. It participates in carbohydrate degradation; glycolysis; pyruvate from D-glyceraldehyde 3-phosphate: step 4/5. In terms of biological role, catalyzes the reversible conversion of 2-phosphoglycerate (2-PG) into phosphoenolpyruvate (PEP). It is essential for the degradation of carbohydrates via glycolysis. This Bordetella bronchiseptica (strain ATCC BAA-588 / NCTC 13252 / RB50) (Alcaligenes bronchisepticus) protein is Enolase.